Consider the following 273-residue polypeptide: Undecaprenyl-diphosphatase (273 aa).

Transmembrane regions (helical) follow at residues 4-24 (LILLKALLLGIVEGLTEFLPI), 43-63 (KAKVFTVAIQLGAILAVCWEY), 82-102 (FVINLFIAFLPAAILGLLFIK), 108-128 (LFHPMPVAIALVTGGILILWA), 183-203 (AAEFSFFLAIPVMFAATFYDV), 217-237 (MFATGSVAAFISALIAIRGFI), and 248-268 (FAWYRIGFGLIVLLTAYSGLV).

This sequence belongs to the UppP family.

Its subcellular location is the cell inner membrane. It catalyses the reaction di-trans,octa-cis-undecaprenyl diphosphate + H2O = di-trans,octa-cis-undecaprenyl phosphate + phosphate + H(+). Catalyzes the dephosphorylation of undecaprenyl diphosphate (UPP). Confers resistance to bacitracin. In Nitrosomonas europaea (strain ATCC 19718 / CIP 103999 / KCTC 2705 / NBRC 14298), this protein is Undecaprenyl-diphosphatase.